The following is a 189-amino-acid chain: MAVAPFDERSTMMYLAAEEPQMPLLPVWPEVVIGLICFGIVFFVFSKKLLPVINKTLEERREAIEGGIEKAESAQIEAQSVLEQYKAQLAEARHEAARLRQEAQEQGAVIIQEMKAEGQRQREEIIAAGHTQIEADRKAAASALRQDVGKLATDLAGKLVGESLQDHARQSGTVDRFLDELEAKAEAAR.

Residues L25–F45 traverse the membrane as a helical segment.

The protein belongs to the ATPase B chain family. As to quaternary structure, F-type ATPases have 2 components, F(1) - the catalytic core - and F(0) - the membrane proton channel. F(1) has five subunits: alpha(3), beta(3), gamma(1), delta(1), epsilon(1). F(0) has three main subunits: a(1), b(2) and c(10-14). The alpha and beta chains form an alternating ring which encloses part of the gamma chain. F(1) is attached to F(0) by a central stalk formed by the gamma and epsilon chains, while a peripheral stalk is formed by the delta and b chains.

Its subcellular location is the cell membrane. Its function is as follows. F(1)F(0) ATP synthase produces ATP from ADP in the presence of a proton or sodium gradient. F-type ATPases consist of two structural domains, F(1) containing the extramembraneous catalytic core and F(0) containing the membrane proton channel, linked together by a central stalk and a peripheral stalk. During catalysis, ATP synthesis in the catalytic domain of F(1) is coupled via a rotary mechanism of the central stalk subunits to proton translocation. In terms of biological role, component of the F(0) channel, it forms part of the peripheral stalk, linking F(1) to F(0). This Streptomyces griseus subsp. griseus (strain JCM 4626 / CBS 651.72 / NBRC 13350 / KCC S-0626 / ISP 5235) protein is ATP synthase subunit b.